The chain runs to 330 residues: Clp protease adapter protein ClpF, chloroplastic (330 aa).

A chloroplast-targeting transit peptide spans 1–65 (MVQSQSLSTL…KSLKQRNLLR (65 aa)). The NTD, required for CLPS1-binding stretch occupies residues 66–138 (VEARWPFQGG…VEEESIRLQE (73 aa)). Coiled coils occupy residues 112-139 (NLEQYDIAQQLREKLTEVEEESIRLQEG) and 175-195 (AAKLRDEISKLEAESLAVSAK). A UVR domain is found at 153-188 (GISIIRLRADLQNAIDSEDYGLAAKLRDEISKLEAE). The segment at 203-310 (EYAFRLGQKL…TAGDFIPVKQ (108 aa)) is yccV-like.

As to quaternary structure, binds to CLPC1 and CLPC2. Interacts with ClpS1; this interaction stimulates their association with ClpC. Associates with the Clp substrate HEMA1 (GluTR). Expressed constitutively in photosynthetic tissues such as leaves, stems and flowers, and, at low levels, in siliques.

The protein resides in the plastid. It localises to the chloroplast. Functionally, clp protease adapter that facilitates CLPS1 recruitment to ClpC chaperones thus forming a binary adapter for selective substrate recognition and delivery to plastid Clp protease system (CLPC). The sequence is that of Clp protease adapter protein ClpF, chloroplastic from Arabidopsis thaliana (Mouse-ear cress).